The chain runs to 598 residues: Elongation factor 4 (598 aa).

Positions 5-187 (SHIRNFSIIA…RLVATIPAPI (183 aa)) constitute a tr-type G domain. GTP-binding positions include 17–22 (DHGKST) and 134–137 (NKID).

It belongs to the TRAFAC class translation factor GTPase superfamily. Classic translation factor GTPase family. LepA subfamily.

The protein localises to the cell inner membrane. It catalyses the reaction GTP + H2O = GDP + phosphate + H(+). In terms of biological role, required for accurate and efficient protein synthesis under certain stress conditions. May act as a fidelity factor of the translation reaction, by catalyzing a one-codon backward translocation of tRNAs on improperly translocated ribosomes. Back-translocation proceeds from a post-translocation (POST) complex to a pre-translocation (PRE) complex, thus giving elongation factor G a second chance to translocate the tRNAs correctly. Binds to ribosomes in a GTP-dependent manner. The chain is Elongation factor 4 from Pseudomonas fluorescens (strain Pf0-1).